The chain runs to 155 residues: Small ribosomal subunit protein uS7 (155 aa).

The protein belongs to the universal ribosomal protein uS7 family. Part of the 30S ribosomal subunit. Contacts proteins S9 and S11.

Its function is as follows. One of the primary rRNA binding proteins, it binds directly to 16S rRNA where it nucleates assembly of the head domain of the 30S subunit. Is located at the subunit interface close to the decoding center, probably blocks exit of the E-site tRNA. This Pelodictyon phaeoclathratiforme (strain DSM 5477 / BU-1) protein is Small ribosomal subunit protein uS7.